The sequence spans 336 residues: Probable assembly chaperone of rpl4 (336 aa).

TPR repeat units follow at residues 39-72 (GRAF…SKNL), 75-108 (DQGY…LERL), 110-143 (IDKG…QPDA), and 162-195 (AEAL…ISRA). Residues 316–336 (DEENEEAEWETSENEEEMDED) are disordered.

Belongs to the ACL4 family.

It localises to the cytoplasm. It is found in the nucleus. The protein resides in the nucleolus. Its function is as follows. Acts as a chaperone for the L4 ribosomal subunit encoded by rpl4A and rpl4B, required for hierarchical ribosome assembly. Shields ribosomal protein L4 until timely release and insertion into the pre-ribosome is possible, once ribosomal protein L18 is present. In Schizosaccharomyces pombe (strain 972 / ATCC 24843) (Fission yeast), this protein is Probable assembly chaperone of rpl4.